The chain runs to 232 residues: 7-cyano-7-deazaguanine synthase (232 aa).

8–18 (FSGGQDSTTCL) is a binding site for ATP. Zn(2+)-binding residues include Cys-187, Cys-196, Cys-199, and Cys-202.

The protein belongs to the QueC family. Zn(2+) serves as cofactor.

The catalysed reaction is 7-carboxy-7-deazaguanine + NH4(+) + ATP = 7-cyano-7-deazaguanine + ADP + phosphate + H2O + H(+). It participates in purine metabolism; 7-cyano-7-deazaguanine biosynthesis. In terms of biological role, catalyzes the ATP-dependent conversion of 7-carboxy-7-deazaguanine (CDG) to 7-cyano-7-deazaguanine (preQ(0)). In Vibrio parahaemolyticus serotype O3:K6 (strain RIMD 2210633), this protein is 7-cyano-7-deazaguanine synthase.